The following is a 305-amino-acid chain: MQIELEKILNQNREKIAFGNLPTYIPELTRANKDALGIYISQLDGSEFKAGDYDYKFTIQSISKVITLIMALEDWGAEYIFECVGKEPTGDAFNSMMKLEIVRPSKPFNPMINAGAIAVTSKIKGKSPEERIQRIMDFFKLVTGNPDLKVNESIYMSEKSTGDRNRAMAYFMKDVGVITGDVEENLDLYFKQCSIEVTCKDIARIGLFLSSDGVLLETGKQIINPKHSKIAKALMTTCGMYNASGEFAINVGIPAKSGVGGGIMAVVPGKMGIGVIGPSLDEKGNSIAGVGVLEQLSKMLELSIF.

7 residues coordinate substrate: S61, N113, E158, N165, Y189, Y241, and V259.

It belongs to the glutaminase family. As to quaternary structure, homotetramer.

It catalyses the reaction L-glutamine + H2O = L-glutamate + NH4(+). In Alkaliphilus oremlandii (strain OhILAs) (Clostridium oremlandii (strain OhILAs)), this protein is Glutaminase.